A 96-amino-acid polypeptide reads, in one-letter code: Co-chaperonin GroES (96 aa).

It belongs to the GroES chaperonin family. As to quaternary structure, heptamer of 7 subunits arranged in a ring. Interacts with the chaperonin GroEL.

It is found in the cytoplasm. Functionally, together with the chaperonin GroEL, plays an essential role in assisting protein folding. The GroEL-GroES system forms a nano-cage that allows encapsulation of the non-native substrate proteins and provides a physical environment optimized to promote and accelerate protein folding. GroES binds to the apical surface of the GroEL ring, thereby capping the opening of the GroEL channel. This chain is Co-chaperonin GroES, found in Vibrio atlanticus (strain LGP32) (Vibrio splendidus (strain Mel32)).